A 1010-amino-acid chain; its full sequence is Trifunctional purine biosynthetic protein adenosine-3 (1010 aa).

Ala2 is subject to N-acetylalanine. Phosphoserine is present on Ser10. An ATP-grasp domain is found at 111–318 (KEFMDRHGIP…LYEVIQSTLD (208 aa)). Residues 190–193 (EELL), Glu197, Arg220, and Asn229 each bind ATP. Glu288 and Asn290 together coordinate Mg(2+). Lys350 is subject to N6-acetyllysine. The AIRS domain stretch occupies residues 434 to 809 (SLTYKESGVD…HFSFEKKKAR (376 aa)). The residue at position 440 (Ser440) is a Phosphoserine. Thr682 carries the post-translational modification Phosphothreonine. Residues Ser796 and Ser802 each carry the phosphoserine modification. Residues 810 to 1010 (VAVLISGTGS…NGKICWVKEE (201 aa)) are GART domain. 818–820 (GSN) lines the N(1)-(5-phospho-beta-D-ribosyl)glycinamide pocket. (6R)-10-formyltetrahydrofolate contacts are provided by residues Arg871, 896–899 (MRIL), and Asn913. His915 (proton donor) is an active-site residue. 947–951 (AEDVD) lines the (6R)-10-formyltetrahydrofolate pocket. 977 to 980 (KLAE) contributes to the N(1)-(5-phospho-beta-D-ribosyl)glycinamide binding site.

This sequence in the N-terminal section; belongs to the GARS family. In the central section; belongs to the AIR synthase family. It in the C-terminal section; belongs to the GART family. In terms of assembly, homodimer. Requires Mg(2+) as cofactor. The cofactor is Mn(2+).

It catalyses the reaction 5-phospho-beta-D-ribosylamine + glycine + ATP = N(1)-(5-phospho-beta-D-ribosyl)glycinamide + ADP + phosphate + H(+). The catalysed reaction is N(1)-(5-phospho-beta-D-ribosyl)glycinamide + (6R)-10-formyltetrahydrofolate = N(2)-formyl-N(1)-(5-phospho-beta-D-ribosyl)glycinamide + (6S)-5,6,7,8-tetrahydrofolate + H(+). It carries out the reaction 2-formamido-N(1)-(5-O-phospho-beta-D-ribosyl)acetamidine + ATP = 5-amino-1-(5-phospho-beta-D-ribosyl)imidazole + ADP + phosphate + H(+). Its pathway is purine metabolism; IMP biosynthesis via de novo pathway; 5-amino-1-(5-phospho-D-ribosyl)imidazole from N(2)-formyl-N(1)-(5-phospho-D-ribosyl)glycinamide: step 2/2. It functions in the pathway purine metabolism; IMP biosynthesis via de novo pathway; N(1)-(5-phospho-D-ribosyl)glycinamide from 5-phospho-alpha-D-ribose 1-diphosphate: step 2/2. It participates in purine metabolism; IMP biosynthesis via de novo pathway; N(2)-formyl-N(1)-(5-phospho-D-ribosyl)glycinamide from N(1)-(5-phospho-D-ribosyl)glycinamide (10-formyl THF route): step 1/1. Its function is as follows. Trifunctional enzyme that catalyzes three distinct reactions as part of the 'de novo' inosine monophosphate biosynthetic pathway. The chain is Trifunctional purine biosynthetic protein adenosine-3 (GART) from Homo sapiens (Human).